Consider the following 274-residue polypeptide: Elongation factor Ts (274 aa).

Residues 82-85 are involved in Mg(2+) ion dislocation from EF-Tu; it reads TDFV.

It belongs to the EF-Ts family.

It localises to the cytoplasm. In terms of biological role, associates with the EF-Tu.GDP complex and induces the exchange of GDP to GTP. It remains bound to the aminoacyl-tRNA.EF-Tu.GTP complex up to the GTP hydrolysis stage on the ribosome. The polypeptide is Elongation factor Ts (Christiangramia forsetii (strain DSM 17595 / CGMCC 1.15422 / KT0803) (Gramella forsetii)).